The following is a 202-amino-acid chain: Small ribosomal subunit protein uS4 (202 aa).

Residues 93–156 (RRLDNMVYRL…KDLKIISEAV (64 aa)) enclose the S4 RNA-binding domain.

Belongs to the universal ribosomal protein uS4 family. Part of the 30S ribosomal subunit. Contacts protein S5. The interaction surface between S4 and S5 is involved in control of translational fidelity.

Functionally, one of the primary rRNA binding proteins, it binds directly to 16S rRNA where it nucleates assembly of the body of the 30S subunit. Its function is as follows. With S5 and S12 plays an important role in translational accuracy. This is Small ribosomal subunit protein uS4 from Pediococcus pentosaceus (strain ATCC 25745 / CCUG 21536 / LMG 10740 / 183-1w).